We begin with the raw amino-acid sequence, 109 residues long: ATP-dependent Clp protease adapter protein ClpS (109 aa).

The interval 1-25 (MSERKEGDSGAGVRSAVITQTKPKT) is disordered.

This sequence belongs to the ClpS family. In terms of assembly, binds to the N-terminal domain of the chaperone ClpA.

Functionally, involved in the modulation of the specificity of the ClpAP-mediated ATP-dependent protein degradation. The polypeptide is ATP-dependent Clp protease adapter protein ClpS (Phenylobacterium zucineum (strain HLK1)).